The following is a 439-amino-acid chain: MQIKENKQLCLISLGCSKNLVDSEVMLGKLYNYTLTNDAKSADVILINTCGFIESAKQESIQTILNAAKDKKRGAILIASGCLSERYKDEIKELIPEVDIFTGVGDYDKIDIMIAKKQNQFSEQVFLSEHYNARIITGSSVHAYVKISEGCNQKCSFCAIPSFKGKLQSRELNSILKEVENLALKGYKDMTFIAQDSSSFLYDKGQKDGLIQLISAIDKQQALKSARILYLYPSSTTLELIGAIESSPIFQNYFDMPIQHISDSMLKKMRRNSSQAHHLKLLDAMKQVKESFIRSTIIVGHPEENEGEFEELSAFLDEFQFDRLNIFAFSAEENTHAYSLEKVPKKTINARIKALNKIALKHQNHSFKALLNKPIKALVENKEGEYFYKARDLRWAPEVDGEILINDSALTTPLQPGHYTIVPSVFKDNILLAKVLSPF.

An MTTase N-terminal domain is found at 7-119 (KQLCLISLGC…IDIMIAKKQN (113 aa)). Residues C16, C50, C82, C151, C155, and C158 each coordinate [4Fe-4S] cluster. In terms of domain architecture, Radical SAM core spans 137–368 (TGSSVHAYVK…ALKHQNHSFK (232 aa)).

Belongs to the methylthiotransferase family. RimO subfamily. The cofactor is [4Fe-4S] cluster.

Its subcellular location is the cytoplasm. It carries out the reaction L-aspartate(89)-[ribosomal protein uS12]-hydrogen + (sulfur carrier)-SH + AH2 + 2 S-adenosyl-L-methionine = 3-methylsulfanyl-L-aspartate(89)-[ribosomal protein uS12]-hydrogen + (sulfur carrier)-H + 5'-deoxyadenosine + L-methionine + A + S-adenosyl-L-homocysteine + 2 H(+). In terms of biological role, catalyzes the methylthiolation of an aspartic acid residue of ribosomal protein uS12. The chain is Ribosomal protein uS12 methylthiotransferase RimO from Helicobacter pylori (strain P12).